Reading from the N-terminus, the 123-residue chain is Large ribosomal subunit protein bL12 (123 aa).

The protein belongs to the bacterial ribosomal protein bL12 family. As to quaternary structure, homodimer. Part of the ribosomal stalk of the 50S ribosomal subunit. Forms a multimeric L10(L12)X complex, where L10 forms an elongated spine to which 2 to 4 L12 dimers bind in a sequential fashion. Binds GTP-bound translation factors.

In terms of biological role, forms part of the ribosomal stalk which helps the ribosome interact with GTP-bound translation factors. Is thus essential for accurate translation. The protein is Large ribosomal subunit protein bL12 of Dechloromonas aromatica (strain RCB).